Consider the following 413-residue polypeptide: Protein esc1 (413 aa).

A compositionally biased stretch (polar residues) spans 1–22 (MSSYALPSMQPTPTSSIPLRQM). Disordered stretches follow at residues 1-202 (MSSY…NQPS) and 230-265 (MYVP…YSQG). The segment covering 23-42 (SQPTTSAPSNSASSTPYSPQ) has biased composition (low complexity). Residues 43–63 (QVPLTHNSYPLSTPSSFQHGQ) show a composition bias toward polar residues. 2 stretches are compositionally biased toward low complexity: residues 86–103 (SAAP…STAA) and 116–126 (SSSSYVYSVPP). Residues 127 to 136 (TNSTTSQASA) show a composition bias toward polar residues. Residues 150–197 (STTLTPSTTDSSSTDVSSSDSVSTSASSSNASNTVSVTSPASSSATPL) show a composition bias toward low complexity. The region spanning 334-385 (ELRTSHKLAERKRRKEIKELFDDLKDALPLDKSTKSSKWGLLTRAIQYIEQL) is the bHLH domain.

As to quaternary structure, efficient DNA binding requires dimerization with another bHLH protein.

The protein localises to the nucleus. Involved in the sexual differentiation process. Modulate the ability of the cell to differentiate in response to the nitrogen starvation signal; in particular in response to decreases in the level of cellular cAMP. The sequence is that of Protein esc1 (esc1) from Schizosaccharomyces pombe (strain 972 / ATCC 24843) (Fission yeast).